Here is a 303-residue protein sequence, read N- to C-terminus: tRNA dimethylallyltransferase (303 aa).

An ATP-binding site is contributed by 9-16 (GPTASGKS). 11–16 (TASGKS) contributes to the substrate binding site. Positions 34–37 (DSKQ) are interaction with substrate tRNA.

This sequence belongs to the IPP transferase family. In terms of assembly, monomer. The cofactor is Mg(2+).

It catalyses the reaction adenosine(37) in tRNA + dimethylallyl diphosphate = N(6)-dimethylallyladenosine(37) in tRNA + diphosphate. Functionally, catalyzes the transfer of a dimethylallyl group onto the adenine at position 37 in tRNAs that read codons beginning with uridine, leading to the formation of N6-(dimethylallyl)adenosine (i(6)A). This is tRNA dimethylallyltransferase from Ehrlichia chaffeensis (strain ATCC CRL-10679 / Arkansas).